The following is a 298-amino-acid chain: Glutamyl-Q tRNA(Asp) synthetase (298 aa).

L-glutamate is bound by residues 9-13 (RFAPS) and glutamate 45. The 'HIGH' region motif lies at 12–22 (PSPTGLLHAGS). Residues cysteine 101, cysteine 103, tyrosine 121, and cysteine 125 each coordinate Zn(2+). L-glutamate contacts are provided by tyrosine 179 and arginine 197. A 'KMSKS' region motif is present at residues 235–239 (KLSKQ). ATP is bound at residue lysine 238.

The protein belongs to the class-I aminoacyl-tRNA synthetase family. GluQ subfamily. Zn(2+) is required as a cofactor.

In terms of biological role, catalyzes the tRNA-independent activation of glutamate in presence of ATP and the subsequent transfer of glutamate onto a tRNA(Asp). Glutamate is transferred on the 2-amino-5-(4,5-dihydroxy-2-cyclopenten-1-yl) moiety of the queuosine in the wobble position of the QUC anticodon. The polypeptide is Glutamyl-Q tRNA(Asp) synthetase (Chromobacterium violaceum (strain ATCC 12472 / DSM 30191 / JCM 1249 / CCUG 213 / NBRC 12614 / NCIMB 9131 / NCTC 9757 / MK)).